Here is a 152-residue protein sequence, read N- to C-terminus: Large ribosomal subunit protein bL9 (152 aa).

This sequence belongs to the bacterial ribosomal protein bL9 family.

In terms of biological role, binds to the 23S rRNA. The protein is Large ribosomal subunit protein bL9 of Crocosphaera subtropica (strain ATCC 51142 / BH68) (Cyanothece sp. (strain ATCC 51142)).